Reading from the N-terminus, the 200-residue chain is Large ribosomal subunit protein uL4 (200 aa).

The interval 38 to 68 (GRQGSKQQKTRSDVRGGGKRPWRQKGTGRAR) is disordered. Residues 54–65 (GGKRPWRQKGTG) show a composition bias toward basic residues.

It belongs to the universal ribosomal protein uL4 family. In terms of assembly, part of the 50S ribosomal subunit.

Functionally, one of the primary rRNA binding proteins, this protein initially binds near the 5'-end of the 23S rRNA. It is important during the early stages of 50S assembly. It makes multiple contacts with different domains of the 23S rRNA in the assembled 50S subunit and ribosome. In terms of biological role, forms part of the polypeptide exit tunnel. This is Large ribosomal subunit protein uL4 from Pseudomonas savastanoi pv. phaseolicola (strain 1448A / Race 6) (Pseudomonas syringae pv. phaseolicola (strain 1448A / Race 6)).